Reading from the N-terminus, the 864-residue chain is Carbohydrate-responsive element-binding protein (864 aa).

Disordered stretches follow at residues 15–41 (PRVV…AGGL) and 53–77 (MVSS…LADF). A phosphoserine mark is found at S20, S23, and S25. T27 is subject to Phosphothreonine. A Phosphoserine modification is found at S196. Disordered regions lie at residues 332–397 (SSGI…APGP), 449–468 (PGVS…QPGP), 489–533 (PHFT…TARD), 547–570 (PEQA…PQDT), and 583–602 (PIPA…LAPP). A compositionally biased stretch (polar residues) spans 351–368 (GMTPHSGNTRLQARNSCS). A compositionally biased stretch (low complexity) spans 513 to 531 (ASPPTLASATASPTATATA). Position 566 is a phosphoserine; by AMPK (S566). A compositionally biased stretch (pro residues) spans 583–596 (PIPAPTPPRPPPGP). S614, S626, and S643 each carry phosphoserine. A bHLH domain is found at 661-715 (NRRITHISAEQKRRFNIKLGFDTLHGLVSTLSAQPSLKVSKATTLQKTAEYILML). The interval 715–736 (LQQERAAMQEEAQQLRDEIEEL) is leucine-zipper.

As to quaternary structure, binds DNA as a heterodimer with TCFL4/MLX. Post-translationally, phosphorylation at Ser-566 by AMPK inactivates the DNA-binding activity. Expressed in the ventricular and intermediate zones of the developing spinal cord of 12.5 dpc embryos. In later embryos expressed in a variety of tissues.

The protein localises to the nucleus. Transcriptional repressor. Binds to the canonical and non-canonical E box sequences 5'-CACGTG-3'. In Mus musculus (Mouse), this protein is Carbohydrate-responsive element-binding protein (Mlxipl).